We begin with the raw amino-acid sequence, 375 residues long: Putative monooxygenase Rv1533 (375 aa).

FMN-binding positions include glutamine 190, glycine 195, glycine 224, and tryptophan 243–serine 246.

This sequence belongs to the nitronate monooxygenase family. The cofactor is FMN.

This Mycobacterium tuberculosis (strain ATCC 25618 / H37Rv) protein is Putative monooxygenase Rv1533.